The chain runs to 60 residues: Large ribosomal subunit protein uL30 (60 aa).

It belongs to the universal ribosomal protein uL30 family. As to quaternary structure, part of the 50S ribosomal subunit.

The sequence is that of Large ribosomal subunit protein uL30 from Mycobacteroides abscessus (strain ATCC 19977 / DSM 44196 / CCUG 20993 / CIP 104536 / JCM 13569 / NCTC 13031 / TMC 1543 / L948) (Mycobacterium abscessus).